Reading from the N-terminus, the 194-residue chain is Imidazoleglycerol-phosphate dehydratase (194 aa).

Belongs to the imidazoleglycerol-phosphate dehydratase family.

The protein localises to the cytoplasm. It catalyses the reaction D-erythro-1-(imidazol-4-yl)glycerol 3-phosphate = 3-(imidazol-4-yl)-2-oxopropyl phosphate + H2O. The protein operates within amino-acid biosynthesis; L-histidine biosynthesis; L-histidine from 5-phospho-alpha-D-ribose 1-diphosphate: step 6/9. The chain is Imidazoleglycerol-phosphate dehydratase from Bacillus anthracis (strain A0248).